The sequence spans 91 residues: uncharacterized protein (91 aa).

This sequence belongs to the UPF0440 family.

This is an uncharacterized protein from Methanothermobacter thermautotrophicus (strain ATCC 29096 / DSM 1053 / JCM 10044 / NBRC 100330 / Delta H) (Methanobacterium thermoautotrophicum).